Here is a 361-residue protein sequence, read N- to C-terminus: 3-dehydroquinate synthase (361 aa).

Residues 72–77 (SGEKEK), 130–131 (TT), K142, and K151 contribute to the NAD(+) site. Residues E184, H247, and H264 each contribute to the Zn(2+) site.

It belongs to the sugar phosphate cyclases superfamily. Dehydroquinate synthase family. Co(2+) is required as a cofactor. It depends on Zn(2+) as a cofactor. Requires NAD(+) as cofactor.

The protein localises to the cytoplasm. The enzyme catalyses 7-phospho-2-dehydro-3-deoxy-D-arabino-heptonate = 3-dehydroquinate + phosphate. It participates in metabolic intermediate biosynthesis; chorismate biosynthesis; chorismate from D-erythrose 4-phosphate and phosphoenolpyruvate: step 2/7. Functionally, catalyzes the conversion of 3-deoxy-D-arabino-heptulosonate 7-phosphate (DAHP) to dehydroquinate (DHQ). In Bacillus cereus (strain B4264), this protein is 3-dehydroquinate synthase.